Reading from the N-terminus, the 497-residue chain is FAD-linked oxidoreductase fogF (497 aa).

A signal peptide spans 1 to 18 (MRRNILTALACSWLTAHA). Residues 59-229 (NAPTYAGAIS…TSATYKLHKL (171 aa)) enclose the FAD-binding PCMH-type domain.

The protein belongs to the oxygen-dependent FAD-linked oxidoreductase family. The cofactor is FAD.

Its pathway is secondary metabolite biosynthesis. Its function is as follows. FAD-linked oxidoreductase; part of the gene cluster that mediates the biosynthesis of flavoglaucin and congeners (including aspergin, dihydroauroglaucin and auroglaucin), prenylated salicylaldehyde derivatives carrying a saturated or an unsaturated C-7 side chain. The PKS fogA releases the carboxylic acid (8E,10E,12E)-3,5,7-trihydroxytetradeca-8,10,12-trienoic acid as its product, as well as derivatives with one and two double bonds. FogA is indeed able to reduce the initial triketide, thus being at least partially responsible for the differently saturated heptyl side chains of flavoglaucin congeners. The oxidoreductases fogB, fogC and fogD modify the nascent polyketide in fogA-bound form and, together, fogA, fogB, fogC and fogD are necessary for the formation of the aromatic core and the cyclized PKS products are released as salicyl alcohols. In particular, fogB is responsible for oxidation of a hydroxyl group or reduction of remaining double bond(s) at the C-7 residue whereas fogD is probably involved in the reductive release of the modified PKS products. The cytochrome P450 monooxygenase fogE is then responsible for the hydroxylation at C-3 of the benzene ring. The fogE products are substrates of the prenyltransferase fogH and the prenylated benzyl alcohols are subsequently oxidized by the fogF to produce the final aryl aldehydes flavoglaucin and congeners. The short-chain dehydrogenase fogG does not seem to be involved in the biosynthesis of the prenylated salicylaldehyde derivatives. This Aspergillus ruber (strain CBS 135680) protein is FAD-linked oxidoreductase fogF.